The chain runs to 152 residues: 3-dehydroquinate dehydratase (152 aa).

The active-site Proton acceptor is Y22. 3 residues coordinate substrate: N73, H79, and D86. H99 (proton donor) is an active-site residue. Substrate is bound by residues 100 to 101 (LS) and R110.

The protein belongs to the type-II 3-dehydroquinase family. Homododecamer.

It carries out the reaction 3-dehydroquinate = 3-dehydroshikimate + H2O. It functions in the pathway metabolic intermediate biosynthesis; chorismate biosynthesis; chorismate from D-erythrose 4-phosphate and phosphoenolpyruvate: step 3/7. Catalyzes a trans-dehydration via an enolate intermediate. The polypeptide is 3-dehydroquinate dehydratase (Gemmatimonas aurantiaca (strain DSM 14586 / JCM 11422 / NBRC 100505 / T-27)).